The following is a 279-amino-acid chain: Syntaxin-21 (279 aa).

The segment at 1–34 is disordered; the sequence is MSFQDLEAGTRSPAPNRFTGGRQQRPSSRGDPSQ. Position 2 is an N-acetylserine (serine 2). Residues 2–258 lie on the Cytoplasmic side of the membrane; sequence SFQDLEAGTR…AKTQRSNSSL (257 aa). Residues 21 to 31 are compositionally biased toward polar residues; it reads GRQQRPSSRGD. Residues 65–94 adopt a coiled-coil conformation; sequence ELRDKLQKTRLQISELVKNTSAKLKEASEA. The t-SNARE coiled-coil homology domain occupies 186-248; that stretch reads EAIIEEREQG…TQATVQLRKA (63 aa). Residues 259–279 traverse the membrane as a helical; Anchor for type IV membrane protein segment; that stretch reads TCLLILIFGIVLLIVIIVVLV.

The protein belongs to the syntaxin family. As to quaternary structure, interacts with VTI11 and SYP51 to form a t-SNARE complex and with alpha-SNAP to form a 20S complex. In terms of tissue distribution, a high level expression is seen in the roots while a low level expression is seen in the leaves.

The protein resides in the prevacuolar compartment membrane. May function in the docking or fusion of transport vesicles with the prevacuolar membrane. This chain is Syntaxin-21 (SYP21), found in Arabidopsis thaliana (Mouse-ear cress).